Consider the following 245-residue polypeptide: rRNA adenine N-6-methyltransferase (245 aa).

N10, L12, G37, E58, D83, and S100 together coordinate S-adenosyl-L-methionine.

The protein belongs to the class I-like SAM-binding methyltransferase superfamily. rRNA adenine N(6)-methyltransferase family.

The catalysed reaction is adenosine(2085) in 23S rRNA + 2 S-adenosyl-L-methionine = N(6)-dimethyladenosine(2085) in 23S rRNA + 2 S-adenosyl-L-homocysteine + 2 H(+). This protein produces a dimethylation of the adenine residue at position 2085 in 23S rRNA, resulting in reduced affinity between ribosomes and macrolide-lincosamide-streptogramin B antibiotics. The polypeptide is rRNA adenine N-6-methyltransferase (ermBP) (Clostridium perfringens).